We begin with the raw amino-acid sequence, 503 residues long: Zinc metalloproteinase nas-14 (503 aa).

Residues 1–25 (MRLLYSLFHCSAFLVGFTLSVGVLP) form the signal peptide. The Peptidase M12A domain occupies 116 to 312 (NLVTYPDKLW…KKVNKLYQCG (197 aa)). 2 cysteine pairs are disulfide-bonded: C158/C311 and C182/C202. N192 carries an N-linked (GlcNAc...) asparagine glycan. Residue H210 coordinates Zn(2+). E211 is a catalytic residue. Zn(2+) contacts are provided by H214 and H220. The span at 317-340 (TSSTTTTTTTTTTTTTTEEPTTTT) shows a compositional bias: low complexity. A disordered region spans residues 317–377 (TSSTTTTTTT…TPKPVERSRN (61 aa)). Basic and acidic residues predominate over residues 342-351 (VEEKPKDKKV). Positions 352–370 (SSTTTTTKKPTTTTTTTPK) are enriched in low complexity. 3 disulfide bridges follow: C380-C414, C387-C407, and C396-C411. The ShKT 1 domain occupies 380–414 (CEDLNAHCGMWEQLGHCQHSVKYMAHYCRKACNLC). Residues 422 to 464 (TTTTPKPVPRNKEKENKSASSTTRGTSTATSTTPKTTTTTTSA) are disordered. Residue N437 is glycosylated (N-linked (GlcNAc...) asparagine). Residues 439–464 (SASSTTRGTSTATSTTPKTTTTTTSA) are compositionally biased toward low complexity. Cystine bridges form between C469/C503, C476/C496, and C485/C500. The ShKT 2 domain maps to 469–503 (CEDKNLFCSYWAKIGECNSESKFMKIFCKASCGKC).

Requires Zn(2+) as cofactor. Expressed in pharyngeal muscles and mc cells.

It localises to the secreted. Its function is as follows. Metalloprotease. In Caenorhabditis elegans, this protein is Zinc metalloproteinase nas-14 (nas-14).